The chain runs to 670 residues: Transcription factor Ken 2 (670 aa).

Residues 108 to 176 (TDLLLICDGK…LYSGQVYVRS (69 aa)) form the BTB domain. Disordered stretches follow at residues 200-288 (SDGS…DRDR) and 307-470 (NNHP…SDDA). A compositionally biased stretch (polar residues) spans 218-230 (NRNTEGITGSSVV). Basic residues predominate over residues 325 to 338 (HHLHHHHHHHHRQL). Gly residues-rich tracts occupy residues 351–368 (GGGSGNDGASEGGSGESG) and 389–400 (SGGGGAGSGRRS). Acidic residues predominate over residues 407–419 (EPAEDDEDYELDV). Residues 451 to 464 (SDPVNLSIVKQQQD) show a composition bias toward polar residues. A C2H2-type 1; degenerate zinc finger spans residues 586–594 (NLKTHLRVH). C2H2-type zinc fingers lie at residues 600–623 (FACRLCVAMFKQKAHLLKHLCSVH) and 636–658 (YTCCFCSLVFETLQELVRHLSGH).

The protein resides in the nucleus. Its function is as follows. Transcription factor required for terminalia development. Negative regulator of the JAK/STAT pathway: represses JAK/STAT-dependent expression of ventral veins lacking (vvl) in the posterior spiracles. The polypeptide is Transcription factor Ken 2 (Culex quinquefasciatus (Southern house mosquito)).